The following is a 560-amino-acid chain: Dihydroxy-acid dehydratase (560 aa).

Aspartate 78 contributes to the Mg(2+) binding site. Cysteine 119 contributes to the [2Fe-2S] cluster binding site. Positions 120 and 121 each coordinate Mg(2+). Lysine 121 carries the N6-carboxylysine modification. Cysteine 192 is a [2Fe-2S] cluster binding site. Glutamate 446 is a binding site for Mg(2+). Serine 472 (proton acceptor) is an active-site residue.

It belongs to the IlvD/Edd family. As to quaternary structure, homodimer. The cofactor is [2Fe-2S] cluster. Mg(2+) serves as cofactor.

The enzyme catalyses (2R)-2,3-dihydroxy-3-methylbutanoate = 3-methyl-2-oxobutanoate + H2O. The catalysed reaction is (2R,3R)-2,3-dihydroxy-3-methylpentanoate = (S)-3-methyl-2-oxopentanoate + H2O. It participates in amino-acid biosynthesis; L-isoleucine biosynthesis; L-isoleucine from 2-oxobutanoate: step 3/4. Its pathway is amino-acid biosynthesis; L-valine biosynthesis; L-valine from pyruvate: step 3/4. Its function is as follows. Functions in the biosynthesis of branched-chain amino acids. Catalyzes the dehydration of (2R,3R)-2,3-dihydroxy-3-methylpentanoate (2,3-dihydroxy-3-methylvalerate) into 2-oxo-3-methylpentanoate (2-oxo-3-methylvalerate) and of (2R)-2,3-dihydroxy-3-methylbutanoate (2,3-dihydroxyisovalerate) into 2-oxo-3-methylbutanoate (2-oxoisovalerate), the penultimate precursor to L-isoleucine and L-valine, respectively. The chain is Dihydroxy-acid dehydratase from Anaeromyxobacter dehalogenans (strain 2CP-C).